Consider the following 277-residue polypeptide: Large ribosomal subunit protein uL2 (277 aa).

The disordered stretch occupies residues 225–277 (AMNPVDHPHGGGEGKTSGGRHPVSPWGRPEGKTRRANKPSDRFIIRRKSRKRR). A compositionally biased stretch (basic and acidic residues) spans 253 to 268 (PEGKTRRANKPSDRFI).

The protein belongs to the universal ribosomal protein uL2 family. As to quaternary structure, part of the 50S ribosomal subunit. Forms a bridge to the 30S subunit in the 70S ribosome.

In terms of biological role, one of the primary rRNA binding proteins. Required for association of the 30S and 50S subunits to form the 70S ribosome, for tRNA binding and peptide bond formation. It has been suggested to have peptidyltransferase activity; this is somewhat controversial. Makes several contacts with the 16S rRNA in the 70S ribosome. This chain is Large ribosomal subunit protein uL2, found in Tropheryma whipplei (strain TW08/27) (Whipple's bacillus).